A 329-amino-acid polypeptide reads, in one-letter code: Large ribosomal subunit protein uL3 (329 aa).

It belongs to the universal ribosomal protein uL3 family. In terms of assembly, part of the 50S ribosomal subunit. Forms a cluster with proteins L14 and L24e.

Its function is as follows. One of the primary rRNA binding proteins, it binds directly near the 3'-end of the 23S rRNA, where it nucleates assembly of the 50S subunit. The protein is Large ribosomal subunit protein uL3 of Picrophilus torridus (strain ATCC 700027 / DSM 9790 / JCM 10055 / NBRC 100828 / KAW 2/3).